Consider the following 278-residue polypeptide: Thiazole synthase (278 aa).

K107 functions as the Schiff-base intermediate with DXP in the catalytic mechanism. Residues G168, 194–195 (AG), and 216–217 (AS) each bind 1-deoxy-D-xylulose 5-phosphate.

This sequence belongs to the ThiG family. As to quaternary structure, homotetramer. Forms heterodimers with either ThiH or ThiS.

Its subcellular location is the cytoplasm. It catalyses the reaction [ThiS sulfur-carrier protein]-C-terminal-Gly-aminoethanethioate + 2-iminoacetate + 1-deoxy-D-xylulose 5-phosphate = [ThiS sulfur-carrier protein]-C-terminal Gly-Gly + 2-[(2R,5Z)-2-carboxy-4-methylthiazol-5(2H)-ylidene]ethyl phosphate + 2 H2O + H(+). Its pathway is cofactor biosynthesis; thiamine diphosphate biosynthesis. In terms of biological role, catalyzes the rearrangement of 1-deoxy-D-xylulose 5-phosphate (DXP) to produce the thiazole phosphate moiety of thiamine. Sulfur is provided by the thiocarboxylate moiety of the carrier protein ThiS. In vitro, sulfur can be provided by H(2)S. The sequence is that of Thiazole synthase from Corynebacterium jeikeium (strain K411).